The following is a 182-amino-acid chain: UPF0215 protein Pcal_0119 (182 aa).

It belongs to the UPF0215 family.

This is UPF0215 protein Pcal_0119 from Pyrobaculum calidifontis (strain DSM 21063 / JCM 11548 / VA1).